Consider the following 154-residue polypeptide: N-acetylneuraminate anomerase NanQ (154 aa).

This sequence belongs to the NanQ anomerase family. It depends on Zn(2+) as a cofactor.

It localises to the cytoplasm. It carries out the reaction N-acetyl-alpha-neuraminate = aceneuramate. It catalyses the reaction N-acetyl-beta-neuraminate = aceneuramate. With respect to regulation, inhibited by 1,10-phenanthroline. Its function is as follows. Opens both the alpha- and beta-forms of N-acetylneuraminate (sialic acid; Neu5Ac) to provide aceneuramate, the preferred substrate for NanA. Has preferential activity on the beta-anomer rather than the alpha-anomer. Accelerates a reaction that is spontaneous at slightly alkaline pH, facilitates the reaction at acidic pH. In Escherichia coli (strain K12), this protein is N-acetylneuraminate anomerase NanQ.